The primary structure comprises 354 residues: Rhodopsin (354 aa).

Residues 1 to 36 (MNGTEGPYFYIPMLNTTGVVRSPYEYPQYYLVNPAA) lie on the Extracellular side of the membrane. N-linked (GlcNAc...) asparagine glycans are attached at residues asparagine 2 and asparagine 15. A helical membrane pass occupies residues 37–61 (YAVLGAYMFFLILVGFPINFLTLYV). At 62-73 (TIEHKKLRTPLN) the chain is on the cytoplasmic side. A helical transmembrane segment spans residues 74–96 (YILLNLAVADLFMVFGGFTTTIY). Over 97 to 110 (TSMHGYFVLGRLGC) the chain is Extracellular. Cysteine 110 and cysteine 187 are oxidised to a cystine. Residues 111-133 (NVEGFSATLGGEIALWSLVVLAI) form a helical membrane-spanning segment. The 'Ionic lock' involved in activated form stabilization motif lies at 134–136 (ERW). Residues 134-152 (ERWVVVCKPISNFRFGENH) lie on the Cytoplasmic side of the membrane. Residues 153–173 (AIMGVAFTWFMAAACAVPPLF) traverse the membrane as a helical segment. Topologically, residues 174-202 (GWSRYIPEGMQCSCGIDYYTRAEGFNNES) are extracellular. Asparagine 200 carries an N-linked (GlcNAc...) asparagine glycan. A helical transmembrane segment spans residues 203 to 224 (FVIYMFTCHFCIPLMVVFFCYG). Residues 225-252 (RLVCAVKEAAAAQQESETTQRAEREVTR) are Cytoplasmic-facing. Residues 253-274 (MVIIMVVSFLVSWVPYASVAWY) traverse the membrane as a helical segment. Topologically, residues 275–286 (IFTHQGSEFGPL) are extracellular. The chain crosses the membrane as a helical span at residues 287 to 308 (FMTIPAFFAKSSSIYNPMIYIC). Lysine 296 is modified (N6-(retinylidene)lysine). Residues 309–354 (MNKQFRHCMITTLCCGKNPFEEEEGASSTASKTEASSVSSSSVSPA) are Cytoplasmic-facing. Residues cysteine 322 and cysteine 323 are each lipidated (S-palmitoyl cysteine). The segment at 329–354 (EEEEGASSTASKTEASSVSSSSVSPA) is disordered. Positions 334–354 (ASSTASKTEASSVSSSSVSPA) are enriched in low complexity.

The protein belongs to the G-protein coupled receptor 1 family. Opsin subfamily. Post-translationally, phosphorylated on some or all of the serine and threonine residues present in the C-terminal region. In terms of processing, contains one covalently linked retinal chromophore.

The protein localises to the membrane. It is found in the cell projection. It localises to the cilium. Its subcellular location is the photoreceptor outer segment. Functionally, photoreceptor required for image-forming vision at low light intensity. While most salt water fish species use retinal as chromophore, most freshwater fish use 3-dehydroretinal, or a mixture of retinal and 3-dehydroretinal. Light-induced isomerization of 11-cis to all-trans retinal triggers a conformational change that activates signaling via G-proteins. Subsequent receptor phosphorylation mediates displacement of the bound G-protein alpha subunit by arrestin and terminates signaling. The protein is Rhodopsin (rho) of Atherina boyeri (Big-scale sand smelt).